The primary structure comprises 781 residues: ATP-dependent RNA helicase rok1 (781 aa).

2 disordered regions span residues 7 to 108 (LSRG…KPKL) and 134 to 177 (QDEA…IYPQ). Residues 48–57 (KRGKKRKRKG) are compositionally biased toward basic residues. Residues 66 to 75 (SGDEDDDASD) are compositionally biased toward acidic residues. Composition is skewed to basic and acidic residues over residues 84 to 108 (TPEE…KPKL) and 139 to 173 (TEEK…DKKQ). The Q motif motif lies at 184 to 212 (ELKYTYGIHPVLADNITRQGFRVPTEVQM). Positions 233 to 487 (DVKVEKGIDF…TKHIDKRAKR (255 aa)) constitute a Helicase ATP-binding domain. 246 to 253 (APTGSGKT) contacts ATP. Residues 323-386 (ESNEQEETEQ…SRAKGDQKFK (64 aa)) are disordered. Positions 339 to 369 (QDSDSDSEAESEPEEVMKIDEEEEEEEESDS) are enriched in acidic residues. Basic and acidic residues predominate over residues 370 to 386 (DAEKKTESRAKGDQKFK). The DEAD box motif lies at 434–437 (DEAD). One can recognise a Helicase C-terminal domain in the interval 527–689 (ALRQLLHPVS…GKDIDEKDTV (163 aa)). Positions 718–781 (RGVESRRTGG…KAEEEWTGLD (64 aa)) are disordered. A compositionally biased stretch (basic and acidic residues) spans 736–752 (SWERRRENNRREAIEAS).

Belongs to the DEAD box helicase family. DDX52/ROK1 subfamily. In terms of assembly, interacts with the U3 snoRNA and is associated with the 90S and 40S pre-ribosomes.

The protein resides in the nucleus. It is found in the nucleolus. The enzyme catalyses ATP + H2O = ADP + phosphate + H(+). Its function is as follows. ATP-dependent RNA helicase involved in 40S ribosomal subunit biogenesis. Required for the processing and cleavage of 35S pre-rRNA at sites A0, A1, and A2, leading to mature 18S rRNA. The polypeptide is ATP-dependent RNA helicase rok1 (drh-16) (Neurospora crassa (strain ATCC 24698 / 74-OR23-1A / CBS 708.71 / DSM 1257 / FGSC 987)).